We begin with the raw amino-acid sequence, 407 residues long: Tyrosine--tRNA ligase (407 aa).

Y35 is a binding site for L-tyrosine. Residues 40–49 (PTADSLHVGH) carry the 'HIGH' region motif. Residues Y168 and Q172 each coordinate L-tyrosine. Residues 228–232 (KMGKT) carry the 'KMSKS' region motif. Residue K231 coordinates ATP. An S4 RNA-binding domain is found at 341–405 (NPLVDLLAKC…RGKKNFNRIV (65 aa)).

The protein belongs to the class-I aminoacyl-tRNA synthetase family. TyrS type 1 subfamily. In terms of assembly, homodimer.

Its subcellular location is the cytoplasm. The catalysed reaction is tRNA(Tyr) + L-tyrosine + ATP = L-tyrosyl-tRNA(Tyr) + AMP + diphosphate + H(+). In terms of biological role, catalyzes the attachment of tyrosine to tRNA(Tyr) in a two-step reaction: tyrosine is first activated by ATP to form Tyr-AMP and then transferred to the acceptor end of tRNA(Tyr). This is Tyrosine--tRNA ligase from Clostridium botulinum (strain 657 / Type Ba4).